We begin with the raw amino-acid sequence, 266 residues long: Small ribosomal subunit protein uS2 (266 aa).

It belongs to the universal ribosomal protein uS2 family.

In Paramagnetospirillum magneticum (strain ATCC 700264 / AMB-1) (Magnetospirillum magneticum), this protein is Small ribosomal subunit protein uS2.